Consider the following 351-residue polypeptide: MTTVEVPHGSRSVILTVSAVVEETADTRSIVFAVPDELRDKFAYRPGQFLTLRIPSDRTGSVARCYSLASSPFTDDAPKVTVKRTSDGYGSNWLCDNIATGQTLEVLPPAGVFTPKSLDHDFLLFGAGSGITPVISILKSALTQGGGKVVLVYANRDEKSVIFAEELRALAEKYPTRLTVVHWLESVQGLPTADQLAAIAAPYESYEAFMCGPGPFMDTVHQALNTVGMPRARVHAEVFNSLSGDPFADQAPVEVSDEDAADAATVEVELDGEVHKLSWPRKQTLVDIMLAKGIDVPYSCQEGECGSCACTVLEGKVEMENCDVLDPEDIEAGYILGCQARPVTDHLKIEF.

In terms of domain architecture, FAD-binding FR-type spans 10–116; sequence SRSVILTVSA…LPPAGVFTPK (107 aa). A 2Fe-2S ferredoxin-type domain is found at 264–351; the sequence is ATVEVELDGE…PVTDHLKIEF (88 aa). C300, C305, C308, and C338 together coordinate [2Fe-2S] cluster.

In terms of assembly, the two-component system 3-ketosteroid-9-alpha-monooxygenase is composed of an oxygenase component KshA and a reductase component KshB. FAD is required as a cofactor. [2Fe-2S] cluster serves as cofactor.

It carries out the reaction androsta-1,4-diene-3,17-dione + 2 reduced [2Fe-2S]-[ferredoxin] + O2 + 2 H(+) = 9alpha-hydroxyandrosta-1,4-diene-3,17-dione + 2 oxidized [2Fe-2S]-[ferredoxin] + H2O. It participates in steroid metabolism; cholesterol degradation. Its activity is regulated as follows. KSH activity is completely inhibited by zinc ions. KshB is specifically inhibited by Cu(2+) ions. Functionally, probably involved in the degradation of cholesterol. In vitro, catalyzes the introduction of a 9alpha-hydroxyl moiety into the ring B of 3-ketosteroid substrates such as 1,4-androstadiene-3,17-dione (ADD), 4-androstene-3,17-dione (AD), 4-androstene-17beta-ol-3-one (testosterone), 4-pregnene-3,20-dione (progesterone), 19-nor-4-androstene-3,17-dione (nordion), 1-(5alpha)-androstene-3,17-dione, 5alpha-androstane-3,17-dione and 5beta-androstane-3,17-dione. KSH has the highest activity with 3-keto-Delta4 steroid substrates. This chain is 3-ketosteroid-9-alpha-monooxygenase, ferredoxin reductase component, found in Rhodococcus rhodochrous.